A 702-amino-acid chain; its full sequence is MEQEKHVFSIDWAGRPLTVEIGELAKQANGAVLVRYGDTVVLSTATASKEPKSVDFFPLTVNYEERLYAVGKIPGGFIKREGRPSEKAILASRLIDRPIRPLFAEGFRNEVQVVSMVMSVDQDCSPEMAAMFGSSLALTISDIPFEGPIAGVTVGRVDGKFVINPSVAQMEQSDMHLVVAGTKDAINMVEAGANEVPEEVMLEAIMFGHEEIKRLIAFQEDIAAKVGKEKMEVVLYELNAELEAEIRARVEGEVKRAVQVPEKLAREAAIEQLKAEVVAAYEEQEADEETLKQVKEILYKLVKEEVRRLITEEKVRPDGRKVDEIRPLSSAVGLLPRTHGSGLFTRGQTQALSVCTLGALGDVQILDGLGIEETKRFMHHYNFPPFSVGETGAMRGPGRREIGHGALGERALEPVIPSEKEFPYTIRLVSEVLESNGSTSQASICASTLAMMDAGVPIKAPVAGIAMGLVKSGEHYTILTDIQGMEDHLGDMDFKVAGTEKGVTALQMDIKIKGLSREILEEALQQARKGRLEILKHMMQTISEPRKELSPYAPKILTMQINPDKIRDVIGPSGKQINKIIEETGVKIDIEQDGTIFISSVNEEMNKKAKKIIEDIVREVEVGQVYLGKVKRIEKFGAFVELFSGKDGLVHISELAEERVGKVEDVVSIGDEILVKVTEIDKQGRVNLSRKAVLRDQKEAEQ.

Residues Asp-487 and Asp-493 each contribute to the Mg(2+) site. Residues 554–613 (PKILTMQINPDKIRDVIGPSGKQINKIIEETGVKIDIEQDGTIFISSVNEEMNKKAKKII) enclose the KH domain. Residues 623–691 (GQVYLGKVKR…KQGRVNLSRK (69 aa)) enclose the S1 motif domain.

Belongs to the polyribonucleotide nucleotidyltransferase family. It depends on Mg(2+) as a cofactor.

It is found in the cytoplasm. It catalyses the reaction RNA(n+1) + phosphate = RNA(n) + a ribonucleoside 5'-diphosphate. Functionally, involved in mRNA degradation. Catalyzes the phosphorolysis of single-stranded polyribonucleotides processively in the 3'- to 5'-direction. The sequence is that of Polyribonucleotide nucleotidyltransferase from Anoxybacillus flavithermus (strain DSM 21510 / WK1).